A 184-amino-acid polypeptide reads, in one-letter code: ATP synthase subunit b, chloroplastic (184 aa).

The chain crosses the membrane as a helical span at residues 27 to 49; the sequence is LATNPINLSVVLGVLIFFGKGVL.

It belongs to the ATPase B chain family. In terms of assembly, F-type ATPases have 2 components, F(1) - the catalytic core - and F(0) - the membrane proton channel. F(1) has five subunits: alpha(3), beta(3), gamma(1), delta(1), epsilon(1). F(0) has four main subunits: a(1), b(1), b'(1) and c(10-14). The alpha and beta chains form an alternating ring which encloses part of the gamma chain. F(1) is attached to F(0) by a central stalk formed by the gamma and epsilon chains, while a peripheral stalk is formed by the delta, b and b' chains.

The protein localises to the plastid. It localises to the chloroplast thylakoid membrane. Functionally, f(1)F(0) ATP synthase produces ATP from ADP in the presence of a proton or sodium gradient. F-type ATPases consist of two structural domains, F(1) containing the extramembraneous catalytic core and F(0) containing the membrane proton channel, linked together by a central stalk and a peripheral stalk. During catalysis, ATP synthesis in the catalytic domain of F(1) is coupled via a rotary mechanism of the central stalk subunits to proton translocation. In terms of biological role, component of the F(0) channel, it forms part of the peripheral stalk, linking F(1) to F(0). The polypeptide is ATP synthase subunit b, chloroplastic (Gossypium barbadense (Sea Island cotton)).